The following is a 388-amino-acid chain: Deoxyguanosinetriphosphate triphosphohydrolase-like protein (388 aa).

Residues 1–32 (MSVGMAAPRAPYSCDPDRSRGRLFAEPPSRTR) form a disordered region. Residues 69-205 (RLTHSLEVAQ…AALADDIAYD (137 aa)) enclose the HD domain.

The protein belongs to the dGTPase family. Type 2 subfamily.

This Bradyrhizobium sp. (strain ORS 278) protein is Deoxyguanosinetriphosphate triphosphohydrolase-like protein.